Reading from the N-terminus, the 563-residue chain is Putative inactive polypeptide N-acetylgalactosaminyltransferase 12 (563 aa).

Residues 1-6 (MEVFAS) are Cytoplasmic-facing. Residues 7–29 (VLNCCFKYIVLPVWIFIVLLLLH) traverse the membrane as a helical; Signal-anchor for type II membrane protein segment. The Lumenal segment spans residues 30-563 (RDLSSWDGLM…SVMQSANILV (534 aa)). An N-linked (GlcNAc...) asparagine glycan is attached at N50. C97 and C334 are disulfide-bonded. A catalytic subdomain A region spans residues 109–225 (MKPASIIMIF…NGWLSPLLDT (117 aa)). The tract at residues 280–342 (PYEVAAVRTS…PCSRVGHLQP (63 aa)) is catalytic subdomain B. Residues N389 and N428 are each glycosylated (N-linked (GlcNAc...) asparagine). The Ricin B-type lectin domain maps to 433–549 (ASGHVKTLEF…ANGKQRWILD (117 aa)). An intrachain disulfide couples C446 to C461. Residues N464 and N469 are each glycosylated (N-linked (GlcNAc...) asparagine). Intrachain disulfides connect C485–C499 and C523–C537. An N-linked (GlcNAc...) asparagine glycan is attached at N552.

It belongs to the glycosyltransferase 2 family. GalNAc-T subfamily.

Its subcellular location is the golgi apparatus membrane. In terms of biological role, probable inactive glycosyltransferase. This chain is Putative inactive polypeptide N-acetylgalactosaminyltransferase 12 (pgant12), found in Drosophila melanogaster (Fruit fly).